The following is a 266-amino-acid chain: MAASALDSAWEGLTGSFTEFQLATVVTFLLHETVFFLSGLPSLLFERFGLFAKYKIQKKSNTPSYQNRCVLRLILYHVCVNLPVMVLSYPAFKFMGLRSSLPLPHWTVIVSQVLFYFVLEDFIFYWGHRALHTKWLYKHVHSVHHEYATPFGLTSEYAHPAEILFLGFATIVGPALTGPHLFTLWLWMVLRVLETVEAHSGYHFPWSPSNFLPLYGGSDFHDYHHRVLYTKSGNYASTFVYMDWLFGTDKDYRNAKAIEEKDGKHL.

Helical transmembrane passes span 25–45 (VVTF…SLLF), 74–94 (ILYH…AFKF), 106–126 (WTVI…IFYW), and 163–183 (ILFL…HLFT). Positions 113–248 (VLFYFVLEDF…FVYMDWLFGT (136 aa)) constitute a Fatty acid hydroxylase domain.

Belongs to the sterol desaturase family. As to quaternary structure, homodimer.

The protein resides in the endoplasmic reticulum membrane. The catalysed reaction is a long-chain fatty aldehyde + 2 NADPH + O2 + H(+) = a long-chain alkane + formate + 2 NADP(+) + H2O. In terms of biological role, aldehyde decarbonylase involved in the conversion of aldehydes to alkanes. Core component of a very-long-chain alkane synthesis complex. This chain is Very-long-chain aldehyde decarbonylase GL1-11, found in Oryza sativa subsp. indica (Rice).